The sequence spans 305 residues: Glutaminase (305 aa).

Substrate-binding residues include Ser61, Asn113, Glu158, Asn165, Tyr189, Tyr241, and Val259.

The protein belongs to the glutaminase family. Homotetramer.

The enzyme catalyses L-glutamine + H2O = L-glutamate + NH4(+). The protein is Glutaminase of Clostridium botulinum (strain 657 / Type Ba4).